The following is a 268-amino-acid chain: Small ribosomal subunit protein eS1 (268 aa).

The disordered stretch occupies residues 1–21 (MAVGKNKGLSKGGKKGGKKKV).

Belongs to the eukaryotic ribosomal protein eS1 family. In terms of assembly, component of the small ribosomal subunit. Mature ribosomes consist of a small (40S) and a large (60S) subunit. The 40S subunit contains about 33 different proteins and 1 molecule of RNA (18S). The 60S subunit contains about 49 different proteins and 3 molecules of RNA (28S, 5.8S and 5S).

The protein resides in the cytoplasm. In terms of biological role, essential for oogenesis; required for late follicle cell development. The protein is Small ribosomal subunit protein eS1 of Drosophila virilis (Fruit fly).